Reading from the N-terminus, the 311-residue chain is Protease HtpX homolog 1 (311 aa).

A run of 2 helical transmembrane segments spans residues 12–32 (VISL…IASL) and 35–55 (ISLF…WIIS). Zn(2+) is bound at residue H137. E138 is an active-site residue. A Zn(2+)-binding site is contributed by H141. The next 2 membrane-spanning stretches (helical) occupy residues 159–179 (VLGY…FLAA) and 184–204 (LLFA…TFIL). E216 lines the Zn(2+) pocket.

Belongs to the peptidase M48B family. The cofactor is Zn(2+).

The protein resides in the cell membrane. The polypeptide is Protease HtpX homolog 1 (Saccharolobus solfataricus (strain ATCC 35092 / DSM 1617 / JCM 11322 / P2) (Sulfolobus solfataricus)).